We begin with the raw amino-acid sequence, 179 residues long: Large ribosomal subunit protein uL6 (179 aa).

It belongs to the universal ribosomal protein uL6 family. As to quaternary structure, part of the 50S ribosomal subunit.

Functionally, this protein binds to the 23S rRNA, and is important in its secondary structure. It is located near the subunit interface in the base of the L7/L12 stalk, and near the tRNA binding site of the peptidyltransferase center. This chain is Large ribosomal subunit protein uL6, found in Trichlorobacter lovleyi (strain ATCC BAA-1151 / DSM 17278 / SZ) (Geobacter lovleyi).